The chain runs to 40 residues: Alpha-conotoxin-like Qc1.1c (40 aa).

The propeptide occupies 1 to 19 (SDGRNTAANDKASNLMALR). Cystine bridges form between C22/C28 and C23/C36. The interval 24-26 (PNP) is lacks the Ser-Xaa-Pro motif that is crucial for potent interaction with nAChR.

This sequence belongs to the conotoxin A superfamily. Expressed by the venom duct.

Its subcellular location is the secreted. Functionally, alpha-conotoxins act on postsynaptic membranes, they bind to the nicotinic acetylcholine receptors (nAChR) and thus inhibit them. Has possibly a distinct nAChR binding mode from other alpha-conotoxins, due to a different three residue motif (lacks the Ser-Xaa-Pro motif). The chain is Alpha-conotoxin-like Qc1.1c from Conus quercinus (Oak cone).